Reading from the N-terminus, the 593-residue chain is Maternal uncoordinated protein 2 (593 aa).

This sequence belongs to the SCC4/mau-2 family. As to quaternary structure, may heterodimerize with scc-2/SCC2 to form the cohesin loading complex.

The protein localises to the nucleus. It localises to the nucleoplasm. Its subcellular location is the cytoplasm. Functionally, plays an important role in the loading of the cohesin complex on to DNA. Forms a heterodimeric complex (also known as cohesin loading complex) with scc-2/SCC2 which mediates the loading of the cohesin complex onto chromatin. Required for normal development until the fourth larval stage. Functions cell autonomously to guide migrations during the development of the nervous system. Participates in the guidance of mechanosensory neuron AVM by a slt-1-independent mechanism. Regulates chromosome segregation in early embryos. This chain is Maternal uncoordinated protein 2, found in Caenorhabditis elegans.